A 32-amino-acid chain; its full sequence is Growth hormone-related protein 4 (32 aa).

A disulfide bond links C4 and C11.

Belongs to the somatotropin/prolactin family. Glycosylated. Placental basal zone cells.

The protein localises to the secreted. This is Growth hormone-related protein 4 from Rattus norvegicus (Rat).